The chain runs to 158 residues: 6,7-dimethyl-8-ribityllumazine synthase (158 aa).

Residues Phe23, 61–63 (SME), and 85–87 (AVI) contribute to the 5-amino-6-(D-ribitylamino)uracil site. Residue 90 to 91 (DT) coordinates (2S)-2-hydroxy-3-oxobutyl phosphate. His93 acts as the Proton donor in catalysis. Tyr118 lines the 5-amino-6-(D-ribitylamino)uracil pocket. Arg132 contacts (2S)-2-hydroxy-3-oxobutyl phosphate.

The protein belongs to the DMRL synthase family.

The enzyme catalyses (2S)-2-hydroxy-3-oxobutyl phosphate + 5-amino-6-(D-ribitylamino)uracil = 6,7-dimethyl-8-(1-D-ribityl)lumazine + phosphate + 2 H2O + H(+). It functions in the pathway cofactor biosynthesis; riboflavin biosynthesis; riboflavin from 2-hydroxy-3-oxobutyl phosphate and 5-amino-6-(D-ribitylamino)uracil: step 1/2. Catalyzes the formation of 6,7-dimethyl-8-ribityllumazine by condensation of 5-amino-6-(D-ribitylamino)uracil with 3,4-dihydroxy-2-butanone 4-phosphate. This is the penultimate step in the biosynthesis of riboflavin. The chain is 6,7-dimethyl-8-ribityllumazine synthase from Prochlorococcus marinus (strain MIT 9211).